A 427-amino-acid polypeptide reads, in one-letter code: Endothelin-1 receptor (427 aa).

A signal peptide spans 1–20 (METFWLRVSFWVALVGGVIS). Residues 21–80 (DNPESYSTNLSIHVDSVTTFRGTELSFVVTTHQPTNLALPSNGSMHNYCPQQTKITSAFK) lie on the Extracellular side of the membrane. Asn29 and Asn62 each carry an N-linked (GlcNAc...) asparagine glycan. Residues 81-102 (YINTVISCTIFIVGMVGNATLL) traverse the membrane as a helical segment. Topologically, residues 103–112 (RIIYQNKCMR) are cytoplasmic. A helical membrane pass occupies residues 113–132 (NGPNALIASLALGDLIYVVI). The Extracellular segment spans residues 133-159 (DLPINVFKLLAGRWPFEQNDFGVFLCK). A disulfide bridge connects residues Cys158 and Cys239. A helical membrane pass occupies residues 160 to 181 (LFPFLQKSSVGITVLNLCALSV). The Cytoplasmic segment spans residues 182-205 (DRYRAVASWSRVQGIGIPLVTAIE). Residues 206–229 (IVSIWILSFILAIPEAIGFVMVPF) form a helical membrane-spanning segment. Over 230 to 256 (EYKGAQHRTCMLNATSKFMEFYQDVKD) the chain is Extracellular. Residues 257–278 (WWLFGFYFCMPLVCTAIFYTLM) traverse the membrane as a helical segment. At 279-306 (TCEMLNRRNGSLRIALSEHLKQRREVAK) the chain is on the cytoplasmic side. A helical membrane pass occupies residues 307 to 328 (TVFCLVVIFALCWFPLHLSRIL). Topologically, residues 329–347 (KKTVYDEMDTNRCELLSFL) are extracellular. The helical transmembrane segment at 348-372 (LLMDYIGINLATMNSCINPIALYFV) threads the bilayer. Over 373 to 427 (SKKFKNCFQSCLCCCCYQSKSLMTSVPMNGTSIQWKNPEQNNHNTERSSHKDSIN) the chain is Cytoplasmic. A compositionally biased stretch (polar residues) spans 405-415 (IQWKNPEQNNH). The interval 405–427 (IQWKNPEQNNHNTERSSHKDSIN) is disordered. Basic and acidic residues predominate over residues 416-427 (NTERSSHKDSIN). At Ser425 the chain carries Phosphoserine.

Belongs to the G-protein coupled receptor 1 family. Endothelin receptor subfamily. EDNRA sub-subfamily. As to quaternary structure, interacts with HDAC7 and KAT5.

The protein resides in the cell membrane. In terms of biological role, receptor for endothelin-1. Mediates its action by association with G proteins that activate a phosphatidylinositol-calcium second messenger system. The rank order of binding affinities for ET-A is: ET1 &gt; ET2 &gt;&gt; ET3. The chain is Endothelin-1 receptor from Ovis aries (Sheep).